The sequence spans 297 residues: Protoheme IX farnesyltransferase 1 (297 aa).

9 helical membrane passes run 23–43 (VVVL…RAGV), 45–65 (WSVL…AAVV), 93–113 (LPAL…LLVF), 117–137 (LTAW…TGFL), 145–165 (IVIG…AVSG), 171–191 (PLLL…ALAI), 216–236 (LHIL…YAIH), 241–261 (LYLA…WVLY), and 277–297 (IGYL…LLSL).

This sequence belongs to the UbiA prenyltransferase family. Protoheme IX farnesyltransferase subfamily.

The protein resides in the cell inner membrane. It catalyses the reaction heme b + (2E,6E)-farnesyl diphosphate + H2O = Fe(II)-heme o + diphosphate. It functions in the pathway porphyrin-containing compound metabolism; heme O biosynthesis; heme O from protoheme: step 1/1. Its function is as follows. Converts heme B (protoheme IX) to heme O by substitution of the vinyl group on carbon 2 of heme B porphyrin ring with a hydroxyethyl farnesyl side group. This chain is Protoheme IX farnesyltransferase 1, found in Pseudomonas putida (strain ATCC 700007 / DSM 6899 / JCM 31910 / BCRC 17059 / LMG 24140 / F1).